The following is a 262-amino-acid chain: Putative non-heme bromoperoxidase BpoC (262 aa).

Residues arginine 21, 87–88, and arginine 120 contribute to the substrate site; that span reads SM. The active site involves serine 87. Active-site residues include aspartate 211 and histidine 239. Histidine 239 contributes to the substrate binding site.

Belongs to the AB hydrolase superfamily. As to quaternary structure, homodimer.

This chain is Putative non-heme bromoperoxidase BpoC (bpoC), found in Mycobacterium tuberculosis (strain CDC 1551 / Oshkosh).